We begin with the raw amino-acid sequence, 324 residues long: MQKKYITAIIGTTALSALASTHAQAATTHTVKSGESVWSISHKYGISIAKLKSLNGLTSNLIFPNQVLKVSGSSSRATSTNSGTVYTVKAGDSLSSIAAKYGTTYQKIMQLNGLNNYLIFPGQKLKVSGKATSSSRAKASGSSGRTATYTVKYGDSLSAIASKYGTTYQKIMQLNGLTNFFIYPGQKLKVPGGSSSSSSSNNTRSNGGYYSPTFNHQNLYTWGQCTWHVFNRRAEIGKGISTYWWNANNWDNASAADGYTIDYRPTVGSIAQTDAGYYGHVAFVERVNSDGSILVSEMNWSAAPGNMTYRTIPAYQVRNYKFIH.

A signal peptide spans Met-1–Ala-25. LysM domains are found at residues Thr-27–Val-70, Thr-84–Val-127, and Ala-147–Val-190. The region spanning Ser-200–His-324 is the Peptidase C51 domain.

It localises to the secreted. Its subcellular location is the cell surface. It carries out the reaction Hydrolyzes the link between N-acetylmuramoyl residues and L-amino acid residues in certain cell-wall glycopeptides.. Peptidoglycan hydrolase involved in the splitting of the septum during cell division. The chain is N-acetylmuramoyl-L-alanine amidase sle1 (sle1) from Staphylococcus epidermidis (strain ATCC 12228 / FDA PCI 1200).